The following is a 550-amino-acid chain: Hydroxylamine reductase (550 aa).

Residues Cys7, Cys10, Cys19, and Cys25 each contribute to the [4Fe-4S] cluster site. 8 residues coordinate hybrid [4Fe-2O-2S] cluster: His244, Glu268, Cys312, Cys405, Cys433, Cys458, Glu493, and Lys495. Cys405 carries the post-translational modification Cysteine persulfide.

The protein belongs to the HCP family. It depends on [4Fe-4S] cluster as a cofactor. The cofactor is hybrid [4Fe-2O-2S] cluster.

It localises to the cytoplasm. It catalyses the reaction A + NH4(+) + H2O = hydroxylamine + AH2 + H(+). Functionally, catalyzes the reduction of hydroxylamine to form NH(3) and H(2)O. The chain is Hydroxylamine reductase from Porphyromonas gingivalis (strain ATCC BAA-308 / W83).